A 454-amino-acid chain; its full sequence is N-acetyl-S-(2-succino)cysteine lyase (454 aa).

Position 106-107 (106-107) interacts with fumarate; sequence TT. His154 serves as the catalytic Proton donor/acceptor. Residue Arg233 coordinates fumarate. The active-site Proton donor/acceptor is Ser277. Fumarate is bound by residues Thr278 and 283-285; that span reads KRN.

This sequence belongs to the lyase 1 family.

It catalyses the reaction N-acetyl-S-(2-succino)-L-cysteine = N-acetyl-L-cysteine + fumarate. It participates in amino-acid biosynthesis; L-cysteine biosynthesis. Its function is as follows. Catalyzes the cleavage of N-acetyl-S-(2-succino)cysteine into fumarate and N-acetylcysteine. Is involved in a S-(2-succino)cysteine (2SC) degradation pathway that allows the bacterium to recover cysteine from 2SC and to detoxify 2SC that may be a toxic metabolite. Can also perform the reverse reaction in vitro, and has minor activity against 2SC and other small molecule thiols. The chain is N-acetyl-S-(2-succino)cysteine lyase from Dickeya dadantii (strain 3937) (Erwinia chrysanthemi (strain 3937)).